We begin with the raw amino-acid sequence, 365 residues long: Flagellar P-ring protein (365 aa).

The first 19 residues, 1-19, serve as a signal peptide directing secretion; that stretch reads MIKFLSALILLLVTTAAQA.

It belongs to the FlgI family. As to quaternary structure, the basal body constitutes a major portion of the flagellar organelle and consists of four rings (L,P,S, and M) mounted on a central rod.

The protein resides in the periplasm. It is found in the bacterial flagellum basal body. Assembles around the rod to form the L-ring and probably protects the motor/basal body from shearing forces during rotation. This chain is Flagellar P-ring protein, found in Escherichia coli O9:H4 (strain HS).